A 149-amino-acid polypeptide reads, in one-letter code: Calmodulin (149 aa).

A2 is subject to N-acetylalanine. 4 EF-hand domains span residues 8–43 (EQIA…LGQN), 44–79 (PTEA…KMKD), 81–116 (DSEE…LGEK), and 117–149 (LTDE…MTTK). D21, D23, D25, T27, E32, D57, D59, N61, T63, E68, D94, D96, N98, and E105 together coordinate Ca(2+). K116 is modified (N6,N6,N6-trimethyllysine). Ca(2+) is bound by residues D130, D132, D134, Q136, and E141.

Belongs to the calmodulin family. In terms of assembly, interacts (in the presence of Ca(2+)) with pde-1, madf-3, rpl-7A, tax-6, efk-1, npp-1, obr-4, sos-1, akt-1, unc-13, tag-196, ugt-48, nmy-2, F27D4.4, ddx-23, efa-6 and R11H6.4.

Its function is as follows. Calmodulin mediates the control of a large number of enzymes, ion channels and other proteins by Ca(2+). Among the enzymes to be stimulated by the calmodulin-Ca(2+) complex are a number of protein kinases and phosphatases. This Caenorhabditis elegans protein is Calmodulin (cmd-1).